The primary structure comprises 1479 residues: ABC transporter ecdL (1479 aa).

Transmembrane regions (helical) follow at residues 32-52, 82-102, and 142-162; these read LLFE…SVAL, LSNA…WLSF, and IASI…VEAM. N-linked (GlcNAc...) asparagine glycosylation is found at N183 and N234. Transmembrane regions (helical) follow at residues 251–271 and 291–311; these read WGGF…PFLV and SGLI…TAAF. The region spanning 258-535 is the ABC transmembrane type-1 1 domain; it reads LCLIGVNYAQ…FVESLMGLRQ (278 aa). N345 carries an N-linked (GlcNAc...) asparagine glycan. Helical transmembrane passes span 365–382 and 391–411; these read LHET…LWLL and VAAA…SGLL. N-linked (GlcNAc...) asparagine glycosylation is present at N427. The next 2 membrane-spanning stretches (helical) occupy residues 469–489 and 503–523; these read LLVA…TFAF and PLLA…GQAV. An ABC transporter 1 domain is found at 607–835; sequence IVLQNHTASW…GSSLRLEELV (229 aa). N-linked (GlcNAc...) asparagine glycans are attached at residues N611 and N628. Residue 641–648 coordinates ATP; that stretch reads GPIGSGKS. N-linked (GlcNAc...) asparagine glycans are attached at residues N793 and N797. 5 consecutive transmembrane segments (helical) span residues 885–905, 955–975, 1028–1048, 1052–1072, and 1135–1155; these read TIGW…VVAL, LFAV…LHLM, ALIG…VIVY, YLAA…MFYL, and IWLT…LVSI. In terms of domain architecture, ABC transmembrane type-1 2 spans 932-1193; it reads IWLKFWTEAN…LVYNWTALEN (262 aa). N1161 is a glycosylation site (N-linked (GlcNAc...) asparagine). A helical membrane pass occupies residues 1165 to 1185; that stretch reads ASIGLALVNLIAFGANMKGLV. The N-linked (GlcNAc...) asparagine glycan is linked to N1187. Residues 1230–1461 form the ABC transporter 2 domain; sequence IKFKSVTASY…RSIFASLLRS (232 aa). Position 1264–1271 (1264–1271) interacts with ATP; sequence GRTGCGKS. The disordered stretch occupies residues 1460-1479; it reads RSGDEEPGNGHKHESEGEEE. A compositionally biased stretch (basic and acidic residues) spans 1461-1479; it reads SGDEEPGNGHKHESEGEEE.

Belongs to the ABC transporter superfamily. ABCC family. Conjugate transporter (TC 3.A.1.208) subfamily.

It localises to the cell membrane. Functionally, ABC transporter; part of the gene cluster that mediates the biosynthesis of echinocandin B, a fungal lipidated cyclic hexapeptide that acts as an antifungal agent. The sequence is that of ABC transporter ecdL from Aspergillus rugulosus (Emericella rugulosa).